Reading from the N-terminus, the 182-residue chain is Isopentenyl-diphosphate Delta-isomerase (182 aa).

Residues His-25 and His-32 each contribute to the Mn(2+) site. Cys-67 is an active-site residue. His-69 lines the Mn(2+) pocket. Glu-87 is a binding site for Mg(2+). Mn(2+) is bound by residues Glu-114 and Glu-116. Residue Glu-116 is part of the active site.

Belongs to the IPP isomerase type 1 family. Homodimer. The cofactor is Mg(2+). Mn(2+) is required as a cofactor.

The protein resides in the cytoplasm. It carries out the reaction isopentenyl diphosphate = dimethylallyl diphosphate. It participates in isoprenoid biosynthesis; dimethylallyl diphosphate biosynthesis; dimethylallyl diphosphate from isopentenyl diphosphate: step 1/1. Catalyzes the 1,3-allylic rearrangement of the homoallylic substrate isopentenyl (IPP) to its highly electrophilic allylic isomer, dimethylallyl diphosphate (DMAPP). In Escherichia coli (strain K12 / MC4100 / BW2952), this protein is Isopentenyl-diphosphate Delta-isomerase.